A 75-amino-acid chain; its full sequence is UPF0270 protein PFL_4336 (75 aa).

Belongs to the UPF0270 family.

The protein is UPF0270 protein PFL_4336 of Pseudomonas fluorescens (strain ATCC BAA-477 / NRRL B-23932 / Pf-5).